The primary structure comprises 547 residues: Chaperonin GroEL (547 aa).

ATP-binding positions include 30 to 33, Lys-51, 87 to 91, Gly-415, and Asp-495; these read TLGP and DGTTT. Residues 525 to 547 are disordered; that stretch reads PDEKEAGGGAPDMGGMGGMGGMM. Residues 531 to 547 show a composition bias toward gly residues; it reads GGGAPDMGGMGGMGGMM.

It belongs to the chaperonin (HSP60) family. As to quaternary structure, forms a cylinder of 14 subunits composed of two heptameric rings stacked back-to-back. Interacts with the co-chaperonin GroES.

The protein resides in the cytoplasm. The catalysed reaction is ATP + H2O + a folded polypeptide = ADP + phosphate + an unfolded polypeptide.. In terms of biological role, together with its co-chaperonin GroES, plays an essential role in assisting protein folding. The GroEL-GroES system forms a nano-cage that allows encapsulation of the non-native substrate proteins and provides a physical environment optimized to promote and accelerate protein folding. The chain is Chaperonin GroEL from Chromohalobacter salexigens (strain ATCC BAA-138 / DSM 3043 / CIP 106854 / NCIMB 13768 / 1H11).